Here is a 340-residue protein sequence, read N- to C-terminus: Outer membrane protein B (340 aa).

An N-terminal signal peptide occupies residues 1 to 26 (MSSKLVNYLRLTFLSFLGIASTSLDA).

It belongs to the chlamydial OMP family.

It is found in the cell outer membrane. The protein is Outer membrane protein B (ompB) of Chlamydia trachomatis serovar D (strain ATCC VR-885 / DSM 19411 / UW-3/Cx).